Here is a 178-residue protein sequence, read N- to C-terminus: Ribosome maturation factor RimM (178 aa).

Positions 101–178 (DGEYYWYQLQ…EMKVEWDADF (78 aa)) constitute a PRC barrel domain.

The protein belongs to the RimM family. As to quaternary structure, binds ribosomal protein uS19.

The protein resides in the cytoplasm. Its function is as follows. An accessory protein needed during the final step in the assembly of 30S ribosomal subunit, possibly for assembly of the head region. Essential for efficient processing of 16S rRNA. May be needed both before and after RbfA during the maturation of 16S rRNA. It has affinity for free ribosomal 30S subunits but not for 70S ribosomes. The sequence is that of Ribosome maturation factor RimM from Pseudomonas fluorescens (strain ATCC BAA-477 / NRRL B-23932 / Pf-5).